The sequence spans 85 residues: Mitochondrial protein pet191 homolog (85 aa).

The 44-residue stretch at 18–61 (HSDCMFVKKKSARECLKNKDELPEECKNLIEAYGECKRQMLDMT) folds into the CHCH domain. Residues 21–32 (CMFVKKKSAREC) carry the Cx10C motif motif. 2 disulfides stabilise this stretch: cysteine 21–cysteine 53 and cysteine 32–cysteine 43. Residues 43-53 (CKNLIEAYGEC) carry the Cx9C motif motif. Residues 65–85 (RIAPEKNTDQDTEKPSNVDEQ) are disordered.

The protein belongs to the PET191 family.

Its subcellular location is the mitochondrion. In terms of biological role, involved in the assembly of cytochrome c oxidase. The sequence is that of Mitochondrial protein pet191 homolog from Schizosaccharomyces pombe (strain 972 / ATCC 24843) (Fission yeast).